We begin with the raw amino-acid sequence, 909 residues long: Coatomer subunit beta'-3 (909 aa).

WD repeat units follow at residues 13–52, 55–94, 97–136, 140–180, 183–224, 227–266, 269–309, 351–390, and 461–501; these read QRSE…ITKS, VTEL…KVKV, AHSD…ACTQ, GHSH…PNFT, AHQK…CVQT, GHTH…LENT, YGLE…ASMD, TCDL…RSFG, and QIDV…SHFD. Residues 862-909 form a disordered region; the sequence is EENGHVENEGDEEEQQEEEVNEEEGVVDADSTDGAVLVNGSEVLTPHP. Residues 870–892 show a composition bias toward acidic residues; it reads EGDEEEQQEEEVNEEEGVVDADS.

Belongs to the WD repeat COPB2 family. In terms of assembly, oligomeric complex that consists of at least the alpha, beta, beta', gamma, delta, epsilon and zeta subunits.

It localises to the cytoplasm. The protein resides in the golgi apparatus membrane. It is found in the cytoplasmic vesicle. Its subcellular location is the COPI-coated vesicle membrane. Functionally, the coatomer is a cytosolic protein complex that binds to dilysine motifs and reversibly associates with Golgi non-clathrin-coated vesicles, which further mediate biosynthetic protein transport from the ER, via the Golgi up to the trans Golgi network. Coatomer complex is required for budding from Golgi membranes, and is essential for the retrograde Golgi-to-ER transport of dilysine-tagged proteins. In Arabidopsis thaliana (Mouse-ear cress), this protein is Coatomer subunit beta'-3.